Consider the following 122-residue polypeptide: Small ribosomal subunit protein uS8c (122 aa).

Belongs to the universal ribosomal protein uS8 family. As to quaternary structure, part of the 30S ribosomal subunit.

Its subcellular location is the plastid. The protein resides in the chloroplast. Functionally, one of the primary rRNA binding proteins, it binds directly to 16S rRNA central domain where it helps coordinate assembly of the platform of the 30S subunit. This chain is Small ribosomal subunit protein uS8c (rps8), found in Ostreococcus tauri.